The primary structure comprises 259 residues: Hydroxyacylglutathione hydrolase (259 aa).

Positions 56, 58, 60, 61, 112, 133, and 171 each coordinate Zn(2+). Residues 224-238 (RTRETSVKEKADERS) are compositionally biased toward basic and acidic residues. Positions 224-245 (RTRETSVKEKADERSSGQNTSQ) are disordered.

Belongs to the metallo-beta-lactamase superfamily. Glyoxalase II family. Monomer. Requires Zn(2+) as cofactor.

The catalysed reaction is an S-(2-hydroxyacyl)glutathione + H2O = a 2-hydroxy carboxylate + glutathione + H(+). Its pathway is secondary metabolite metabolism; methylglyoxal degradation; (R)-lactate from methylglyoxal: step 2/2. Functionally, thiolesterase that catalyzes the hydrolysis of S-D-lactoyl-glutathione to form glutathione and D-lactic acid. The polypeptide is Hydroxyacylglutathione hydrolase (Pseudomonas savastanoi pv. phaseolicola (strain 1448A / Race 6) (Pseudomonas syringae pv. phaseolicola (strain 1448A / Race 6))).